Here is a 212-residue protein sequence, read N- to C-terminus: Uracil phosphoribosyltransferase (212 aa).

Residues Arg-78, Arg-103, and 130–138 (DPMLATGGS) each bind 5-phospho-alpha-D-ribose 1-diphosphate. Uracil is bound by residues Ile-193 and 198-200 (GDA). A 5-phospho-alpha-D-ribose 1-diphosphate-binding site is contributed by Asp-199.

Belongs to the UPRTase family. Requires Mg(2+) as cofactor.

It carries out the reaction UMP + diphosphate = 5-phospho-alpha-D-ribose 1-diphosphate + uracil. The protein operates within pyrimidine metabolism; UMP biosynthesis via salvage pathway; UMP from uracil: step 1/1. Allosterically activated by GTP. In terms of biological role, catalyzes the conversion of uracil and 5-phospho-alpha-D-ribose 1-diphosphate (PRPP) to UMP and diphosphate. This chain is Uracil phosphoribosyltransferase, found in Pseudomonas entomophila (strain L48).